The sequence spans 555 residues: Formate--tetrahydrofolate ligase (555 aa).

64 to 71 lines the ATP pocket; it reads TKAGIGKT.

It belongs to the formate--tetrahydrofolate ligase family.

It carries out the reaction (6S)-5,6,7,8-tetrahydrofolate + formate + ATP = (6R)-10-formyltetrahydrofolate + ADP + phosphate. Its pathway is one-carbon metabolism; tetrahydrofolate interconversion. This is Formate--tetrahydrofolate ligase from Parabacteroides distasonis (strain ATCC 8503 / DSM 20701 / CIP 104284 / JCM 5825 / NCTC 11152).